A 499-amino-acid polypeptide reads, in one-letter code: L-asparagine permease (499 aa).

12 helical membrane passes run 34 to 54 (QVQMIAIGGAIGTGLFLGAGA), 58 to 78 (MAGPALALVYLICGLFSFFIL), 109 to 129 (VAGWMYFINWAMTGIVDITAV), 146 to 166 (VFALAALTIVGTMNMIGVKWF), 171 to 191 (FWFALIKVLAIVTFLVVGTVF), 219 to 239 (LLPALVLIQGVVFAFASIEMV), 264 to 284 (IGLFYVGSVVLLVMLLPWSAY), 298 to 318 (LGVPYIGSIMNIVVLTAALSS), 353 to 373 (YAGILATLVVYVVGVFLNYLV), 378 to 398 (FEIVLNFASLGIIASWAFIIV), 422 to 442 (APFTSWLTLLFLLSVLVLMAF), and 448 to 468 (TYTIAALPIIGILLVIGWFGV).

This sequence belongs to the amino acid-polyamine-organocation (APC) superfamily. Amino acid transporter (AAT) (TC 2.A.3.1) family.

It localises to the cell inner membrane. This Escherichia coli (strain K12) protein is L-asparagine permease (ansP).